The primary structure comprises 261 residues: MAGLSFDNYQRNNFLAENSHTQPKATSTGTTIVGVKFNNGVVIAADTRSTQGPIVADKNCAKLHRISPKIWCAGAGTAADTEAVTQLIGSNIELHSLYTSREPRVVSALQMLKQHLFKYQGHIGAYLIVAGVDPTGSHLFSIHAHGSTDVGYYLSLGSGSLAAMAVLESHWKQDLTKEEAIKLASDAIQAGIWNDLGSGSNVDVCVMEIGKDAEYLRNYLTPNVREEKQKSYKFPRGTTAVLKESIVNICDIQEEQVDITA.

Positions 1 to 29 (MAGLSFDNYQRNNFLAENSHTQPKATSTG) are cleaved as a propeptide — removed in mature form. Catalysis depends on threonine 30, which acts as the Nucleophile.

Belongs to the peptidase T1B family. As to quaternary structure, the 26S proteasome consists of a 20S proteasome core and two 19S regulatory subunits. The 20S proteasome core is composed of 28 subunits that are arranged in four stacked rings, resulting in a barrel-shaped structure. The two end rings are each formed by seven alpha subunits, and the two central rings are each formed by seven beta subunits. The catalytic chamber with the active sites is on the inside of the barrel.

The protein resides in the cytoplasm. It is found in the nucleus. It carries out the reaction Cleavage of peptide bonds with very broad specificity.. Its function is as follows. The proteasome degrades poly-ubiquitinated proteins in the cytoplasm and in the nucleus. It is essential for the regulated turnover of proteins and for the removal of misfolded proteins. The proteasome is a multicatalytic proteinase complex that is characterized by its ability to cleave peptides with Arg, Phe, Tyr, Leu, and Glu adjacent to the leaving group at neutral or slightly basic pH. It has an ATP-dependent proteolytic activity. The polypeptide is Proteasome subunit beta type-2 (PUP1) (Saccharomyces cerevisiae (strain ATCC 204508 / S288c) (Baker's yeast)).